A 103-amino-acid polypeptide reads, in one-letter code: High-potential iron-sulfur protein (103 aa).

The N-terminal stretch at 1–28 (MSNRRLFLKSIPIMAAAGAVGMAGLARA) is a signal peptide. 4 residues coordinate [4Fe-4S] cluster: C66, C69, C82, and C96.

This sequence belongs to the high-potential iron-sulfur protein (HiPIP) family. Homodimer.

Its subcellular location is the periplasm. Its function is as follows. Specific class of high-redox-potential 4Fe-4S ferredoxins. Functions in anaerobic electron transport in most purple and in some other photosynthetic bacteria and in at least one genus (Paracoccus) of halophilic, denitrifying bacteria. In Ralstonia nicotianae (strain ATCC BAA-1114 / GMI1000) (Ralstonia solanacearum), this protein is High-potential iron-sulfur protein (hip).